A 64-amino-acid chain; its full sequence is Large ribosomal subunit protein bL35 (64 aa).

The interval Met-1 to Val-55 is disordered. The segment covering Lys-23–Gln-39 has biased composition (basic residues).

The protein belongs to the bacterial ribosomal protein bL35 family.

This Chlamydia muridarum (strain MoPn / Nigg) protein is Large ribosomal subunit protein bL35.